Here is a 339-residue protein sequence, read N- to C-terminus: Phospho-N-acetylmuramoyl-pentapeptide-transferase (339 aa).

10 consecutive transmembrane segments (helical) span residues 4–24, 53–73, 80–100, 113–133, 145–165, 176–196, 202–222, 228–248, 253–273, and 318–338; these read TTII…PFFI, MGGT…AFVL, AFGA…IGFL, GLTA…FYLV, LFGF…FWVV, GIDG…SVIA, FDVL…FVYN, VFMG…ISIT, WTLL…MLQV, and VDFF…AILY.

It belongs to the glycosyltransferase 4 family. MraY subfamily. The cofactor is Mg(2+).

It is found in the cell membrane. It catalyses the reaction UDP-N-acetyl-alpha-D-muramoyl-L-alanyl-gamma-D-glutamyl-L-lysyl-D-alanyl-D-alanine + di-trans,octa-cis-undecaprenyl phosphate = Mur2Ac(oyl-L-Ala-gamma-D-Glu-L-Lys-D-Ala-D-Ala)-di-trans,octa-cis-undecaprenyl diphosphate + UMP. It functions in the pathway cell wall biogenesis; peptidoglycan biosynthesis. Functionally, catalyzes the initial step of the lipid cycle reactions in the biosynthesis of the cell wall peptidoglycan: transfers peptidoglycan precursor phospho-MurNAc-pentapeptide from UDP-MurNAc-pentapeptide onto the lipid carrier undecaprenyl phosphate, yielding undecaprenyl-pyrophosphoryl-MurNAc-pentapeptide, known as lipid I. The polypeptide is Phospho-N-acetylmuramoyl-pentapeptide-transferase (Streptococcus mutans serotype c (strain ATCC 700610 / UA159)).